We begin with the raw amino-acid sequence, 638 residues long: Trichohyalin-like protein 1 (638 aa).

One can recognise an EF-hand domain in the interval 49–84 (HVFHAVERKLNLLNFDRDGTISFEEFVLAIFSLLNP). The interval 134-638 (SEMASSGQPS…ALEAESLEAQ (505 aa)) is disordered. A compositionally biased stretch (polar residues) spans 166–179 (LPRNVSEPNDPENQ). Composition is skewed to basic and acidic residues over residues 221 to 246 (IPRERSKPSRRLSDTKISDHMIQRPT), 294 to 309 (DDTKLSEAQETGKDAG), and 318 to 328 (EEPKADAKVAE). Over residues 343–357 (DQSVQSRSRNVSETS) the composition is skewed to polar residues. 6 stretches are compositionally biased toward basic and acidic residues: residues 358–372 (SRGEQEGEWKEHERI), 395–409 (RENDAKKDSAAKDPS), 419–435 (EIKEDSVSGKEARHSEE), 479–490 (RIQDKPVRKEDH), 526–548 (AEPHVPEDSQSQIDHHGDAKQES), and 622–631 (AGRENRKALE).

The protein belongs to the S-100 family.

The chain is Trichohyalin-like protein 1 (Tchhl1) from Mus musculus (Mouse).